Consider the following 113-residue polypeptide: uncharacterized protein (113 aa).

The segment at 31–113 is disordered; it reads SNNNNNNNNN…YSPTKFNLQY (83 aa). Over residues 32 to 98 the composition is skewed to low complexity; that stretch reads NNNNNNNNNN…NNNNNNNNNN (67 aa). The segment covering 99–113 has biased composition (polar residues); sequence SSSFEYSPTKFNLQY.

This is an uncharacterized protein from Dictyostelium discoideum (Social amoeba).